Reading from the N-terminus, the 468-residue chain is ATP synthase subunit beta (468 aa).

155-162 (GGAGVGKT) is a binding site for ATP.

Belongs to the ATPase alpha/beta chains family. F-type ATPases have 2 components, CF(1) - the catalytic core - and CF(0) - the membrane proton channel. CF(1) has five subunits: alpha(3), beta(3), gamma(1), delta(1), epsilon(1). CF(0) has three main subunits: a(1), b(2) and c(9-12). The alpha and beta chains form an alternating ring which encloses part of the gamma chain. CF(1) is attached to CF(0) by a central stalk formed by the gamma and epsilon chains, while a peripheral stalk is formed by the delta and b chains.

The protein localises to the cell membrane. The catalysed reaction is ATP + H2O + 4 H(+)(in) = ADP + phosphate + 5 H(+)(out). Its function is as follows. Produces ATP from ADP in the presence of a proton gradient across the membrane. The catalytic sites are hosted primarily by the beta subunits. The sequence is that of ATP synthase subunit beta from Bacillus cereus (strain G9842).